The following is an 84-amino-acid chain: Large ribosomal subunit protein bL27 (84 aa).

Residues 1 to 21 (MAHKKGGGSTKNGRDSNPKYL) are disordered.

Belongs to the bacterial ribosomal protein bL27 family.

The protein is Large ribosomal subunit protein bL27 of Chlorobium phaeovibrioides (strain DSM 265 / 1930) (Prosthecochloris vibrioformis (strain DSM 265)).